The following is a 301-amino-acid chain: Probable alpha-L-glutamate ligase (301 aa).

One can recognise an ATP-grasp domain in the interval 104–287; the sequence is LQLLARKGIG…VAGQLIDYIE (184 aa). ATP contacts are provided by residues Lys141, 178–179, Asp187, and 211–213; these read EF and RSN. Positions 248, 260, and 262 each coordinate Mg(2+). Residues Asp248, Glu260, and Asn262 each contribute to the Mn(2+) site.

It belongs to the RimK family. It depends on Mg(2+) as a cofactor. Requires Mn(2+) as cofactor.

This is Probable alpha-L-glutamate ligase from Maridesulfovibrio salexigens (strain ATCC 14822 / DSM 2638 / NCIMB 8403 / VKM B-1763) (Desulfovibrio salexigens).